A 620-amino-acid polypeptide reads, in one-letter code: MSFDIAKYPTLALVDSTQELRLLPKESLPKLCDELRRYLLDSVSRSSGHFASGLGTVELTVALHYVYNTPFDQLIWDVGHQAYPHKILTGRRDKIGTIRQKGGLHPFPWRGESEYDVLSVGHSSTSISAGIGIAVAAEKEGKNRRTVCVIGDGAITAGMAFEAMNHAGDIRPDMLVVLNDNEMSISENVGALNNHLAQLLSGKLYSSLREGGKKVFSGVPPIKELLKRTEEHIKGMVVPGTLFEELGFNYIGPVDGHDVLGLITTLKNMRDLKGPQFLHIMTKKGRGYEPAEKDPITFHAVPKFDPSSGCLPKSSGGLPSYSKIFGDWLCETAAKDNKLMAITPAMREGSGMVEFSRKFPDRYFDVAIAEQHAVTFAAGLAIGGYKPIVAIYSTFLQRAYDQVLHDVAIQKLPVLFAIDRAGIVGADGQTHQGAFDLSYLRCIPEMVIMTPSDENECRQMLYTGYHYNDGPSAVRYPRGNAVGVELTPLEKLPIGKGIVKCRGEKLAILNFGTLMPEAAKVAESLNATLVDMRFVKPLDEALILEMAASHEALVTVEENAIMGGAGSGVNEVLMAHRKPVSVLNIGLPDFFIPQGTQEEMRAELGLDATGMEAKIKAWLA.

Thiamine diphosphate is bound by residues histidine 80 and 121–123; that span reads GHS. Aspartate 152 is a binding site for Mg(2+). Thiamine diphosphate-binding positions include 153–154, asparagine 181, tyrosine 288, and glutamate 370; that span reads GA. Asparagine 181 provides a ligand contact to Mg(2+).

Belongs to the transketolase family. DXPS subfamily. Homodimer. It depends on Mg(2+) as a cofactor. Thiamine diphosphate serves as cofactor.

The catalysed reaction is D-glyceraldehyde 3-phosphate + pyruvate + H(+) = 1-deoxy-D-xylulose 5-phosphate + CO2. The protein operates within metabolic intermediate biosynthesis; 1-deoxy-D-xylulose 5-phosphate biosynthesis; 1-deoxy-D-xylulose 5-phosphate from D-glyceraldehyde 3-phosphate and pyruvate: step 1/1. In terms of biological role, catalyzes the acyloin condensation reaction between C atoms 2 and 3 of pyruvate and glyceraldehyde 3-phosphate to yield 1-deoxy-D-xylulose-5-phosphate (DXP). The polypeptide is 1-deoxy-D-xylulose-5-phosphate synthase (Escherichia coli O6:K15:H31 (strain 536 / UPEC)).